A 289-amino-acid polypeptide reads, in one-letter code: RNA exonuclease 4 (289 aa).

Residues Met1–Lys24 show a composition bias toward polar residues. The interval Met1–Lys34 is disordered. Basic residues predominate over residues Gln25–Lys34. Residues Tyr121 to Tyr273 form the Exonuclease domain.

Belongs to the REXO4 family.

The protein localises to the nucleus. In terms of biological role, exoribonuclease involved in ribosome biosynthesis. Involved in the processing of ITS1, the internal transcribed spacer localized between the 18S and 5.8S rRNAs. The protein is RNA exonuclease 4 (REX4) of Saccharomyces cerevisiae (strain ATCC 204508 / S288c) (Baker's yeast).